Reading from the N-terminus, the 261-residue chain is Acidic leucine-rich nuclear phosphoprotein 32 family member B (261 aa).

4 LRR repeats span residues 16-40, 43-64, 65-87, and 89-110; these read PAAVRELVLDNCKSNDGKIEGLTAE, NLEFLSLINVGLISVSNLPKLP, KLKKLELSDNRICGGLDMLAEKL, and NLTHLNLSGNKLKDIGTLEPLK. At K86 the chain carries N6-acetyllysine. The region spanning 123–161 is the LRRCT domain; it reads CEVTNLNDYRESVFKLLPQLTYLDGYDREDREAPDSDAE. A disordered region spans residues 149 to 261; sequence DREDREAPDS…RETDDEGEDD (113 aa). The segment covering 157–243 has biased composition (acidic residues); it reads DSDAEVDGVD…DEDEDEEEEE (87 aa). S158 bears the Phosphoserine mark. Positions 244 to 254 are enriched in basic and acidic residues; the sequence is SGKGEGRKRET. Residue T254 is modified to Phosphothreonine.

The protein belongs to the ANP32 family. In terms of assembly, monomer. Interacts with histones H3 and H4. Post-translationally, some glutamate residues are glycylated by TTLL8. This modification occurs exclusively on glutamate residues and results in a glycine chain on the gamma-carboxyl group.

It localises to the nucleus. Its function is as follows. Multifunctional protein working as a cell cycle progression factor as well as a cell survival factor. Required for the progression from the G1 to the S phase. Anti-apoptotic protein which functions as a caspase-3 inhibitor. Has no phosphatase 2A (PP2A) inhibitor activity. Exhibits histone chaperone properties, stimulating core histones to assemble into a nucleosome. The protein is Acidic leucine-rich nuclear phosphoprotein 32 family member B (ANP32B) of Ovis aries (Sheep).